Here is a 627-residue protein sequence, read N- to C-terminus: Plasmepsin IX (627 aa).

Over 1 to 13 the chain is Cytoplasmic; sequence MFFINFKKIKKKQ. The helical; Signal-anchor for type II membrane protein transmembrane segment at 14-34 threads the bilayer; that stretch reads FPIYLTQHRIITVFLIFIYFI. Residues 35-627 lie on the Lumenal side of the membrane; it reads NLKDCFHINN…SSLHNKINNL (593 aa). One can recognise a Peptidase A1 domain in the interval 228–605; the sequence is YVGYIQIGTP…NNNSSYVGIA (378 aa). Active-site residues include aspartate 246 and aspartate 495.

Belongs to the peptidase A1 family. Autocleaved into a p55 mature form.

Its subcellular location is the membrane. The protein localises to the cytoplasmic vesicle. It is found in the secretory vesicle. It localises to the rhoptry. Inhibited by small molecule 49c. Inhibited by small molecule WM382. Functionally, during the asexual blood stage, initiates the proteolytic maturation of several rhoptry proteins and thus, is required for merozoite invasion of host erythrocytes and probably the subsequent development of the ring-stage. Cleaves rhoptry associated protein 1 RAP1 and apical sushi protein ASP during schizont maturation. Also cleaves rhoptry protein RON3. In Plasmodium falciparum (isolate 3D7), this protein is Plasmepsin IX.